The chain runs to 430 residues: Enolase (430 aa).

Position 163 (Gln-163) interacts with (2R)-2-phosphoglycerate. Catalysis depends on Glu-205, which acts as the Proton donor. Mg(2+) is bound by residues Asp-242, Glu-287, and Asp-314. 4 residues coordinate (2R)-2-phosphoglycerate: Lys-339, Arg-368, Ser-369, and Lys-390. The active-site Proton acceptor is Lys-339.

This sequence belongs to the enolase family. The cofactor is Mg(2+).

It is found in the cytoplasm. Its subcellular location is the secreted. It localises to the cell surface. The enzyme catalyses (2R)-2-phosphoglycerate = phosphoenolpyruvate + H2O. It participates in carbohydrate degradation; glycolysis; pyruvate from D-glyceraldehyde 3-phosphate: step 4/5. In terms of biological role, catalyzes the reversible conversion of 2-phosphoglycerate (2-PG) into phosphoenolpyruvate (PEP). It is essential for the degradation of carbohydrates via glycolysis. The chain is Enolase from Bacillus pumilus (strain SAFR-032).